The sequence spans 245 residues: Major prion protein (245 aa).

A signal peptide spans 1-22; sequence MANLGCWMLVVFVATWSDLGLC. Residues 23–222 form an interaction with GRB2, ERI3 and SYN1 region; the sequence is KKRPKPGGWN…ESQAYYQRGS (200 aa). The segment at 25–102 is disordered; it reads RPKPGGWNTG…KPSKPKTSMK (78 aa). 4 tandem repeats follow at residues 51–59, 60–67, 68–75, and 76–83. The tract at residues 51 to 83 is 4 X 8 AA tandem repeats of P-H-G-G-G-W-G-Q; the sequence is PQGGGGWGQPHGGGWGQPHGGGWGQPHGGGWGQ. The segment covering 52-87 has biased composition (gly residues); the sequence is QGGGGWGQPHGGGWGQPHGGGWGQPHGGGWGQGGGT. Gly54, Gly55, His61, Gly62, Gly63, His69, Gly70, Gly71, His77, Gly78, and Gly79 together coordinate Cu(2+). Over residues 90–101 the composition is skewed to basic residues; the sequence is QWHKPSKPKTSM. A disulfide bridge connects residues Cys171 and Cys206. N-linked (GlcNAc...) asparagine glycosylation is found at Asn173 and Asn189. Residue Ser222 is the site of GPI-anchor amidated serine attachment. A propeptide spans 223–245 (removed in mature form); the sequence is SMVLFSSPPVILLISFLIFLIVG.

This sequence belongs to the prion family. As to quaternary structure, monomer and homodimer. Has a tendency to aggregate into amyloid fibrils containing a cross-beta spine, formed by a steric zipper of superposed beta-strands. Soluble oligomers may represent an intermediate stage on the path to fibril formation. Copper binding may promote oligomerization. Interacts with GRB2, APP, ERI3/PRNPIP and SYN1. Mislocalized cytosolically exposed PrP interacts with MGRN1; this interaction alters MGRN1 subcellular location and causes lysosomal enlargement. Interacts with KIAA1191.

It is found in the cell membrane. The protein localises to the golgi apparatus. In terms of biological role, its primary physiological function is unclear. Has cytoprotective activity against internal or environmental stresses. May play a role in neuronal development and synaptic plasticity. May be required for neuronal myelin sheath maintenance. May play a role in iron uptake and iron homeostasis. Soluble oligomers are toxic to cultured neuroblastoma cells and induce apoptosis (in vitro). Association with GPC1 (via its heparan sulfate chains) targets PRNP to lipid rafts. Also provides Cu(2+) or Zn(2+) for the ascorbate-mediated GPC1 deaminase degradation of its heparan sulfate side chains. This Cercopithecus diana (Diana monkey) protein is Major prion protein (PRNP).